The chain runs to 840 residues: DNA mismatch repair protein MutS (840 aa).

601–608 (GPNMSGKS) is an ATP binding site.

It belongs to the DNA mismatch repair MutS family.

Its function is as follows. This protein is involved in the repair of mismatches in DNA. It is possible that it carries out the mismatch recognition step. This protein has a weak ATPase activity. This is DNA mismatch repair protein MutS from Lactococcus lactis subsp. cremoris (strain MG1363).